The sequence spans 374 residues: Putative zinc metalloprotease R01501 (374 aa).

H26 contacts Zn(2+). Residue E27 is part of the active site. H30 is a binding site for Zn(2+). The next 4 membrane-spanning stretches (helical) occupy residues 36 to 55 (WSGI…LFGW), 112 to 134 (AATV…AVLF), 301 to 323 (VLNF…VPVL), and 348 to 367 (LAFR…AAWN). In terms of domain architecture, PDZ spans 126–199 (AIAIFAVLFS…LPITVRIERE (74 aa)).

The protein belongs to the peptidase M50B family. It depends on Zn(2+) as a cofactor.

It is found in the cell inner membrane. The protein is Putative zinc metalloprotease R01501 of Rhizobium meliloti (strain 1021) (Ensifer meliloti).